The chain runs to 405 residues: Acetate kinase (405 aa).

Asparagine 7 serves as a coordination point for Mg(2+). Lysine 14 contacts ATP. Substrate is bound at residue arginine 99. Aspartate 156 serves as the catalytic Proton donor/acceptor. Residue histidine 215 to glycine 219 participates in ATP binding. Glutamate 391 serves as a coordination point for Mg(2+).

Belongs to the acetokinase family. Homodimer. Requires Mg(2+) as cofactor. It depends on Mn(2+) as a cofactor.

It is found in the cytoplasm. It carries out the reaction acetate + ATP = acetyl phosphate + ADP. Its pathway is metabolic intermediate biosynthesis; acetyl-CoA biosynthesis; acetyl-CoA from acetate: step 1/2. Catalyzes the formation of acetyl phosphate from acetate and ATP. Can also catalyze the reverse reaction. The protein is Acetate kinase of Trichormus variabilis (strain ATCC 29413 / PCC 7937) (Anabaena variabilis).